Here is a 166-residue protein sequence, read N- to C-terminus: Orotate phosphoribosyltransferase (166 aa).

Residues arginine 83, lysine 84, histidine 89, and 109–117 contribute to the 5-phospho-alpha-D-ribose 1-diphosphate site; that span reads DDVATTGGS. Residues threonine 113 and arginine 141 each contribute to the orotate site.

Belongs to the purine/pyrimidine phosphoribosyltransferase family. PyrE subfamily. As to quaternary structure, homodimer. Requires Mg(2+) as cofactor.

The enzyme catalyses orotidine 5'-phosphate + diphosphate = orotate + 5-phospho-alpha-D-ribose 1-diphosphate. Its pathway is pyrimidine metabolism; UMP biosynthesis via de novo pathway; UMP from orotate: step 1/2. Functionally, catalyzes the transfer of a ribosyl phosphate group from 5-phosphoribose 1-diphosphate to orotate, leading to the formation of orotidine monophosphate (OMP). The protein is Orotate phosphoribosyltransferase of Picrophilus torridus (strain ATCC 700027 / DSM 9790 / JCM 10055 / NBRC 100828 / KAW 2/3).